A 347-amino-acid chain; its full sequence is NADH-ubiquinone oxidoreductase chain 2 (347 aa).

Transmembrane regions (helical) follow at residues 1 to 21, 25 to 45, 68 to 88, 96 to 116, 122 to 142, 145 to 165, 178 to 198, 201 to 221, 239 to 259, 274 to 294, and 326 to 346; these read MNPM…SIVL, HWFL…PVLM, MILV…TIMI, MLIT…FWVP, VSLS…LSLL, IFPS…IMIG, IMAY…IYNP, SLLN…LLII, IVVS…PLTG, SSVM…FFYM, and MMSL…LITL.

It belongs to the complex I subunit 2 family. As to quaternary structure, core subunit of respiratory chain NADH dehydrogenase (Complex I) which is composed of 45 different subunits. Interacts with TMEM242.

The protein resides in the mitochondrion inner membrane. The enzyme catalyses a ubiquinone + NADH + 5 H(+)(in) = a ubiquinol + NAD(+) + 4 H(+)(out). Its function is as follows. Core subunit of the mitochondrial membrane respiratory chain NADH dehydrogenase (Complex I) which catalyzes electron transfer from NADH through the respiratory chain, using ubiquinone as an electron acceptor. Essential for the catalytic activity and assembly of complex I. This Sylvisorex lunaris (Moon forest shrew) protein is NADH-ubiquinone oxidoreductase chain 2.